The chain runs to 130 residues: S-adenosylmethionine decarboxylase proenzyme (130 aa).

Ser64 acts as the Schiff-base intermediate with substrate; via pyruvic acid in catalysis. Ser64 carries the pyruvic acid (Ser); by autocatalysis modification. His69 (proton acceptor; for processing activity) is an active-site residue. Residue Cys84 is the Proton donor; for catalytic activity of the active site.

The protein belongs to the prokaryotic AdoMetDC family. Type 1 subfamily. In terms of assembly, heterotetramer of two alpha and two beta chains arranged as a dimer of alpha/beta heterodimers. It depends on pyruvate as a cofactor. Post-translationally, is synthesized initially as an inactive proenzyme. Formation of the active enzyme involves a self-maturation process in which the active site pyruvoyl group is generated from an internal serine residue via an autocatalytic post-translational modification. Two non-identical subunits are generated from the proenzyme in this reaction, and the pyruvate is formed at the N-terminus of the alpha chain, which is derived from the carboxyl end of the proenzyme. The post-translation cleavage follows an unusual pathway, termed non-hydrolytic serinolysis, in which the side chain hydroxyl group of the serine supplies its oxygen atom to form the C-terminus of the beta chain, while the remainder of the serine residue undergoes an oxidative deamination to produce ammonia and the pyruvoyl group blocking the N-terminus of the alpha chain.

The catalysed reaction is S-adenosyl-L-methionine + H(+) = S-adenosyl 3-(methylsulfanyl)propylamine + CO2. It functions in the pathway amine and polyamine biosynthesis; S-adenosylmethioninamine biosynthesis; S-adenosylmethioninamine from S-adenosyl-L-methionine: step 1/1. In terms of biological role, catalyzes the decarboxylation of S-adenosylmethionine to S-adenosylmethioninamine (dcAdoMet), the propylamine donor required for the synthesis of the polyamines spermine and spermidine from the diamine putrescine. This is S-adenosylmethionine decarboxylase proenzyme from Picrophilus torridus (strain ATCC 700027 / DSM 9790 / JCM 10055 / NBRC 100828 / KAW 2/3).